Here is a 365-residue protein sequence, read N- to C-terminus: Uroporphyrinogen decarboxylase (365 aa).

Substrate contacts are provided by residues 27–31 (RQAGR), D77, Y154, S209, and H327.

It belongs to the uroporphyrinogen decarboxylase family. As to quaternary structure, homodimer.

It is found in the cytoplasm. It carries out the reaction uroporphyrinogen III + 4 H(+) = coproporphyrinogen III + 4 CO2. It participates in porphyrin-containing compound metabolism; protoporphyrin-IX biosynthesis; coproporphyrinogen-III from 5-aminolevulinate: step 4/4. In terms of biological role, catalyzes the decarboxylation of four acetate groups of uroporphyrinogen-III to yield coproporphyrinogen-III. The protein is Uroporphyrinogen decarboxylase of Alkalilimnicola ehrlichii (strain ATCC BAA-1101 / DSM 17681 / MLHE-1).